A 206-amino-acid polypeptide reads, in one-letter code: Large ribosomal subunit protein uL4 (206 aa).

The tract at residues 42-94 (RRQQGSHKAQGRGDVSRTGSKMYKQKGTGRARHHSARAPQFRGGGQAHGPVVR) is disordered. The span at 64 to 77 (YKQKGTGRARHHSA) shows a compositional bias: basic residues.

The protein belongs to the universal ribosomal protein uL4 family. In terms of assembly, part of the 50S ribosomal subunit.

Its function is as follows. One of the primary rRNA binding proteins, this protein initially binds near the 5'-end of the 23S rRNA. It is important during the early stages of 50S assembly. It makes multiple contacts with different domains of the 23S rRNA in the assembled 50S subunit and ribosome. Forms part of the polypeptide exit tunnel. The polypeptide is Large ribosomal subunit protein uL4 (Brucella abortus biovar 1 (strain 9-941)).